The sequence spans 555 residues: Bifunctional epoxide hydrolase 2 (555 aa).

Residues 1–224 form a phosphatase region; sequence MALRAAVFDL…KVTGVQLLQT (224 aa). 2 residues coordinate Mg(2+): Asp-9 and Asp-11. The residue at position 43 (Lys-43) is an N6-acetyllysine. 123-124 serves as a coordination point for phosphate; that stretch reads TN. Asp-185 provides a ligand contact to Mg(2+). 2 positions are modified to N6-acetyllysine: Lys-191 and Lys-215. The interval 235–555 is epoxide hydrolase; sequence SALSHGYVLI…ARNPLVDSKL (321 aa). Residues 259–531 enclose the AB hydrolase-1 domain; that stretch reads PAVCLCHGFP…CGHWTQIDKP (273 aa). Residue Asp-335 is the Nucleophile of the active site. Ser-370 is subject to Phosphoserine. Position 383 (Tyr-383) interacts with substrate. An N6-succinyllysine modification is found at Lys-455. The active-site Proton donor is Tyr-466. Lys-505 bears the N6-succinyllysine mark. Cys-522 is lipidated: S-(15-deoxy-Delta12,14-prostaglandin J2-9-yl)cysteine. His-524 acts as the Proton acceptor in catalysis. A Microbody targeting signal motif is present at residues 553–555; that stretch reads SKL. Residue Lys-554 is modified to N6-succinyllysine.

The protein belongs to the AB hydrolase superfamily. Epoxide hydrolase family. In terms of assembly, homodimer. Requires Mg(2+) as cofactor. In terms of processing, the covalent modification of cysteine by 15-deoxy-Delta12,14-prostaglandin-J2 is autocatalytic and reversible. It may occur as an alternative to other cysteine modifications, such as S-nitrosylation and S-palmitoylation.

It localises to the cytoplasm. Its subcellular location is the peroxisome. The enzyme catalyses an epoxide + H2O = an ethanediol. It carries out the reaction (9S,10S)-10-hydroxy-9-(phosphooxy)octadecanoate + H2O = (9S,10S)-9,10-dihydroxyoctadecanoate + phosphate. The catalysed reaction is (14R,15S)-epoxy-(5Z,8Z,11Z)-eicosatrienoate + H2O = (14R,15R)-dihydroxy-(5Z,8Z,11Z)-eicosatrienoate. Inhibited by 1-(1-acetylpiperidin-4-yl)-3-(4-(trifl uoromethoxy)phenyl)urea (TPAU), 1-cyclohexyl-3-dodecylurea (CDU), 12-(3-adamantan-1-yl-ureido)-dodecanoic acid (AUDA), 1-((3S, 5S, 7S)-adamantan-1-yl)-3-(5-(2-(2-ethoxyethoxy) ethoxy)pentyl)urea (AEPU), N-adamantyl-N[']-cyclohexyl urea (ACU), 4-(((1S, 4S)-4-(3-((3S, 5S, 7S)-adamantan-1-yl) ureido)cyclohexyl)oxy)benzoic acid (c-AUCB), 4-(((1R, 4R)-4-(3-((3S, 5S, 7S)-adamantan-1-yl)ureido)cyclohexyl)oxy)benzoic acid (t-AUCB), 4-(((1R, 4R)-4-(3-(4(trifluoromethoxy)phenyl)ureido)cyclohexyl)oxy)benzoic acid (t-TAUCB) and to a lesser extent by 8-(3-((3S, 5S, 7S)-adamantan-1-yl)ureido) octanoic acid (AUOA). Its function is as follows. Bifunctional enzyme. The C-terminal domain has epoxide hydrolase activity and acts on epoxides (alkene oxides, oxiranes) and arene oxides. Plays a role in xenobiotic metabolism by degrading potentially toxic epoxides. Also determines steady-state levels of physiological mediators. The N-terminal domain has lipid phosphatase activity, with the highest activity towards threo-9,10-phosphonooxy-hydroxy-octadecanoic acid, followed by erythro-9,10-phosphonooxy-hydroxy-octadecanoic acid, 12-phosphonooxy-octadec-9Z-enoic acid and 12-phosphonooxy-octadec-9E-enoic acid. The protein is Bifunctional epoxide hydrolase 2 (EPHX2) of Sus scrofa (Pig).